The sequence spans 232 residues: Zinc-finger homeodomain protein 5 (232 aa).

The span at 1–11 shows a compositional bias: acidic residues; the sequence is MELSEHEEDAG. Residues 1 to 25 form a disordered region; it reads MELSEHEEDAGDVGGGCSSPPTPPH. The segment at 40 to 86 adopts a ZF-HD dimerization-type; degenerate zinc-finger fold; sequence YHECLRNHAAASGGHVVDGCGEFMPASTEEPLACAACGCHRSFHRRD. The interval 126 to 170 is disordered; that stretch reads GLPFPGYGTPSGGTGTTTASSSDERLRPSPVQPRRRSRTTFTREQ. Residues 159–222 constitute a DNA-binding region (homeobox); sequence RRRSRTTFTR…NNKHSFKQKQ (64 aa).

Homo- and heterodimer with other ZFHD proteins.

It is found in the nucleus. Functionally, putative transcription factor. In Oryza sativa subsp. indica (Rice), this protein is Zinc-finger homeodomain protein 5 (ZHD5).